We begin with the raw amino-acid sequence, 106 residues long: Large ribosomal subunit protein eL30 (106 aa).

The protein belongs to the eukaryotic ribosomal protein eL30 family.

This Methanococcus maripaludis (strain C5 / ATCC BAA-1333) protein is Large ribosomal subunit protein eL30.